The sequence spans 291 residues: Urease accessory protein UreD (291 aa).

This sequence belongs to the UreD family. UreD, UreF and UreG form a complex that acts as a GTP-hydrolysis-dependent molecular chaperone, activating the urease apoprotein by helping to assemble the nickel containing metallocenter of UreC. The UreE protein probably delivers the nickel.

Its subcellular location is the cytoplasm. Required for maturation of urease via the functional incorporation of the urease nickel metallocenter. In Polynucleobacter asymbioticus (strain DSM 18221 / CIP 109841 / QLW-P1DMWA-1) (Polynucleobacter necessarius subsp. asymbioticus), this protein is Urease accessory protein UreD.